We begin with the raw amino-acid sequence, 446 residues long: MITIKKGLALPIAGAPSQVINDGKTIKKVALLGEEYVGMRPTMHVRVGDEVKKAQVLFEDKKNPGVKFTAPAAGKVIEINRGAKRVLQSVVIEVAGEEQVTFDKFEAAQLAGLDREVIKTQLVESGLWTALRTRPFSKVPAIESATKAIFVTAMDTNPLAAQPELIITEQQEAFVAGLDILSALTEGKVYVCKSGTSLPSSSQSNVEEHVFDGPHPAGLAGTHMHFLYPVNAENVAWSINYQDVIAFGQLFLTGELYTDRVVSLAGPVVNNPRLLRTVVGASLEDLTDSELMPGEVRVISGSVLSGTQASGPHAYLGRYHQQVSVLREGRDKELFGWATPGKNKFSITKSFLGHIFKGQLFNMTTTTNGSDRAMVPIGNYERVMPLDMEPTLLLRDLCAGDTDSAQTLGALELDEEDLALCTFVCPGKYEYGQLLRECLDTIVKEG.

This sequence belongs to the NqrA family. As to quaternary structure, composed of six subunits; NqrA, NqrB, NqrC, NqrD, NqrE and NqrF.

It catalyses the reaction a ubiquinone + n Na(+)(in) + NADH + H(+) = a ubiquinol + n Na(+)(out) + NAD(+). In terms of biological role, NQR complex catalyzes the reduction of ubiquinone-1 to ubiquinol by two successive reactions, coupled with the transport of Na(+) ions from the cytoplasm to the periplasm. NqrA to NqrE are probably involved in the second step, the conversion of ubisemiquinone to ubiquinol. This chain is Na(+)-translocating NADH-quinone reductase subunit A, found in Vibrio campbellii (strain ATCC BAA-1116).